The primary structure comprises 231 residues: Aquaporin Z (231 aa).

2 helical membrane-spanning segments follow: residues 11–31 (FLGTLWLVLGGCGSAVLAAAF) and 36–56 (IGLLGVSLAFGLTVLTMAFAI). Residues 65-67 (NPA) carry the NPA 1 motif. 3 helical membrane-spanning segments follow: residues 84-104 (LPYIIAQVAGGIAGAGVLYLI), 132-152 (MISVMICEIVMTLFFLLVILG), and 161-181 (GFAPIAIGLCLTLIHLISIPI). The NPA 2 motif lies at 187–189 (NPA). The helical transmembrane segment at 203–223 (VSQLWLFWAAPIIGAILAGVI) threads the bilayer.

It belongs to the MIP/aquaporin (TC 1.A.8) family. Homotetramer.

The protein resides in the cell inner membrane. It catalyses the reaction H2O(in) = H2O(out). Functionally, channel that permits osmotically driven movement of water in both directions. It is involved in the osmoregulation and in the maintenance of cell turgor during volume expansion in rapidly growing cells. It mediates rapid entry or exit of water in response to abrupt changes in osmolarity. The chain is Aquaporin Z from Shewanella oneidensis (strain ATCC 700550 / JCM 31522 / CIP 106686 / LMG 19005 / NCIMB 14063 / MR-1).